A 344-amino-acid polypeptide reads, in one-letter code: L-rhamnose-proton symporter (344 aa).

Transmembrane regions (helical) follow at residues I5–P25, W38–L58, I72–L92, M101–I121, T137–L157, L175–A195, L214–I234, I259–G279, F289–L309, and V323–A343.

This sequence belongs to the L-rhamnose transporter (TC 2.A.7.6) family.

It localises to the cell inner membrane. The catalysed reaction is L-rhamnopyranose(in) + H(+)(in) = L-rhamnopyranose(out) + H(+)(out). Functionally, uptake of L-rhamnose across the cytoplasmic membrane with the concomitant transport of protons into the cell (symport system). The polypeptide is L-rhamnose-proton symporter (Mannheimia succiniciproducens (strain KCTC 0769BP / MBEL55E)).